The chain runs to 2195 residues: Activating signal cointegrator 1 complex subunit 3 (2195 aa).

A coiled-coil region spans residues 31 to 88; that stretch reads EQVVARNKEIMKKRNEKKKEKDRIIEKGQLTWSYFSDSKQNKEKEKENRQIFNKFKEI. A compositionally biased stretch (basic and acidic residues) spans 367–378; that stretch reads QLKKDDKKRYKN. The disordered stretch occupies residues 367–387; it reads QLKKDDKKRYKNDQQQQQQQQ. Residues 492–675 enclose the Helicase ATP-binding 1 domain; it reads ESAYKSNENI…FIRAPASGTH (184 aa). Residue 505–512 coordinates ATP; it reads APTGAGKT. Residues 617–620 carry the DEAH box motif; sequence DEIH. The Helicase C-terminal 1 domain occupies 705–920; the sequence is NMNQLCYERL…NVNEAVNWLS (216 aa). The region spanning 980–1286 is the SEC63 1 domain; that stretch reads MTELGRIASH…GSEGIREISF (307 aa). In terms of domain architecture, Helicase ATP-binding 2 spans 1336–1511; sequence HTLYYTNNNV…WMGIDRVGLF (176 aa). 1349–1356 lines the ATP pocket; the sequence is SPTGSGKT. The short motif at 1453–1456 is the DEAH box element; sequence DEIH. Residues 1545–1750 form the Helicase C-terminal 2 domain; it reads SFAAIATYSP…GTIQSKQGAI (206 aa). The 160-residue stretch at 1810-1969 folds into the SEC63 2 domain; the sequence is PMSMGKIASF…LPHINKDFAD (160 aa). Over residues 2032 to 2062 the composition is skewed to low complexity; sequence TNNNSNNNDDNNNENNNNNNKKNNNNNNNNN. The disordered stretch occupies residues 2032 to 2064; it reads TNNNSNNNDDNNNENNNNNNKKNNNNNNNNNKS.

It belongs to the helicase family.

The protein resides in the nucleus. The protein localises to the cytoplasm. It is found in the cytosol. The catalysed reaction is Couples ATP hydrolysis with the unwinding of duplex DNA by translocating in the 3'-5' direction.. It catalyses the reaction ATP + H2O = ADP + phosphate + H(+). Functionally, ATPase involved both in DNA repair and rescue of stalled ribosomes. In Dictyostelium discoideum (Social amoeba), this protein is Activating signal cointegrator 1 complex subunit 3 (ascc3).